A 647-amino-acid chain; its full sequence is MASLVSLELGLLLAVLVVTATASPPAGLLSLLTSGQGALDQEALGGLLNTLADRVHCANGPCGKCLSVEDALGLGEPEGSGLPPGPVLEARYVARLSAAAVLYLSNPEGTCEDARAGLWASHADHLLALLESPKALTPGLSWLLQRMQARAAGQTPKMACVDIPQLLEEAVGAGAPGSAGGVLAALLDHVRSGSCFHALPSPQYFVDFVFQQHSSEVPMTLAELSALMQRLGVGREAHSDHSHRHRGASSRDPVPLISSSNSSSVWDTVCLSARDVMAAYGLSEQAGVTPEAWAQLSPALLQQQLSGACTSQSRPPVQDQLSQSERYLYGSLATLLICLCAVFGLLLLTCTGCRGVTHYILQTFLSLAVGAVTGDAVLHLTPKVLGLHTHSEEGLSPQPTWRLLAMLAGLYAFFLFENLFNLLLPRDPEDLEDGPCGHSSHSHGGHSHGVSLQLAPSELRQPKPPHEGSRADLVAEESPELLNPEPRRLSPELRLLPYMITLGDAVHNFADGLAVGAAFASSWKTGLATSLAVFCHELPHELGDFAALLHAGLSVRQALLLNLASALTAFAGLYVALAVGVSEESEAWILAVATGLFLYVALCDMLPAMLKVRDPRPWLLFLLHNVGLLGGWTVLLLLSLYEDDITF.

Positions 1-22 (MASLVSLELGLLLAVLVVTATA) are cleaved as a signal peptide. Residues 23 to 327 (SPPAGLLSLL…QDQLSQSERY (305 aa)) are Extracellular-facing. 3 disulfide bridges follow: cysteine 57–cysteine 62, cysteine 65–cysteine 111, and cysteine 160–cysteine 195. Positions 236–255 (EAHSDHSHRHRGASSRDPVP) are disordered. Residue asparagine 261 is glycosylated (N-linked (GlcNAc...) asparagine). Cysteine 270 and cysteine 309 form a disulfide bridge. A helical transmembrane segment spans residues 328–348 (LYGSLATLLICLCAVFGLLLL). The Cytoplasmic portion of the chain corresponds to 349–359 (TCTGCRGVTHY). The helical transmembrane segment at 360–380 (ILQTFLSLAVGAVTGDAVLHL) threads the bilayer. The Extracellular segment spans residues 381-402 (TPKVLGLHTHSEEGLSPQPTWR). A helical membrane pass occupies residues 403-423 (LLAMLAGLYAFFLFENLFNLL). Residues 424–498 (LPRDPEDLED…LSPELRLLPY (75 aa)) are Cytoplasmic-facing. The Essential for SLC39A4 endocytosis motif lies at 452–454 (LQL). The disordered stretch occupies residues 458–484 (ELRQPKPPHEGSRADLVAEESPELLNP). The segment covering 460-470 (RQPKPPHEGSR) has biased composition (basic and acidic residues). A helical membrane pass occupies residues 499-518 (MITLGDAVHNFADGLAVGAA). Residues histidine 507, asparagine 508, and aspartate 511 each coordinate Zn(2+). Over 519-526 (FASSWKTG) the chain is Extracellular. The helical transmembrane segment at 527–553 (LATSLAVFCHELPHELGDFAALLHAGL) threads the bilayer. Positions 536, 537, and 540 each coordinate Zn(2+). Residues 554–558 (SVRQA) lie on the Cytoplasmic side of the membrane. The chain crosses the membrane as a helical span at residues 559 to 579 (LLLNLASALTAFAGLYVALAV). Residues 580-586 (GVSEESE) lie on the Extracellular side of the membrane. A helical transmembrane segment spans residues 587-607 (AWILAVATGLFLYVALCDMLP). The Cytoplasmic segment spans residues 608-617 (AMLKVRDPRP). Residues 618 to 638 (WLLFLLHNVGLLGGWTVLLLL) traverse the membrane as a helical segment. Topologically, residues 639-647 (SLYEDDITF) are extracellular.

The protein belongs to the ZIP transporter (TC 2.A.5) family. As to quaternary structure, homodimer; homodimerization is mediated by the transmembrane domain. Post-translationally, the extracellular N-terminal ectodomain is cleaved when cells are Zn(2+) deficient, N-terminally cleaved SLC39A4 is internalized at a faster rate. Under excess Zn(2+) conditions, SLC39A4 on the cell surface is rapidly endocytosed, ubiquitinated and degraded. In terms of processing, glycosylated. In terms of tissue distribution, highly expressed in kidney, small intestine, stomach, colon, jejunum and duodenum.

It localises to the cell membrane. Its subcellular location is the recycling endosome membrane. The protein resides in the apical cell membrane. The catalysed reaction is Zn(2+)(in) = Zn(2+)(out). The Zn(2+) uniporter activity is regulated by zinc availability. Extracellular acidification stimulated SLC39A4-dependent Zn(2+) uptake. Functionally, selective transporter that mediates the uptake of Zn(2+). Plays an essential role for dietary zinc uptake from small intestine. The Zn(2+) uniporter activity is regulated by zinc availability. Also exhibits polyspecific binding and transport of Cu(2+), Cd(2+) and possibly Ni(2+) but at higher concentrations. The polypeptide is Zinc transporter ZIP4 (Homo sapiens (Human)).